We begin with the raw amino-acid sequence, 113 residues long: Iron-sulfur cluster insertion protein ErpA (113 aa).

The iron-sulfur cluster site is built by Cys41, Cys105, and Cys107.

It belongs to the HesB/IscA family. As to quaternary structure, homodimer. Iron-sulfur cluster serves as cofactor.

Functionally, required for insertion of 4Fe-4S clusters for at least IspG. In Actinobacillus succinogenes (strain ATCC 55618 / DSM 22257 / CCUG 43843 / 130Z), this protein is Iron-sulfur cluster insertion protein ErpA.